A 305-amino-acid polypeptide reads, in one-letter code: MVAIIVHGGAGTIRKEERIPKVLEGVREAVLAGWKELKKGSALDAVEEAIKVLEDNPIFNAGTGSVLTIDGKVEMDAAIMRGKTLEAGAVAGIWGVKNPISVARKVMEKTDHVLLVGEGAVKFARIMGFPEYDPTTEERRKQWQELKEKLMKGEVRHWKKLGELIKEHPEVLRSTVGAVAFDGEEVVAGTSTGGVFLKMFGRVGDTPIIGAGTYANEVAGASCTGLGEVAIKLALAKTATDFVRLGLDAQAASEAAIELATKHFGKDTMGIIMVDSRGNVGFAKNTKHMSYAFMKEGMNEPEAGV.

Catalysis depends on T175, which acts as the Nucleophile. Substrate-binding positions include 202–205 (RVGD) and 224–227 (TGLG).

It belongs to the Ntn-hydrolase family. In terms of assembly, heterotetramer of two alpha and two beta chains arranged as a dimer of alpha/beta heterodimers. The uncleaved protein forms homodimers. Post-translationally, autocleaved. Generates the alpha and beta subunits. The N-terminal residue of the beta subunit is thought to be responsible for the nucleophile hydrolase activity.

It catalyses the reaction L-asparagine + H2O = L-aspartate + NH4(+). Functionally, catalyzes the hydrolysis of L-asparagine into L-aspartate and ammonia. Does not exhibit glutaminase activity. The protein is Plant-type L-asparaginase of Pyrococcus abyssi (strain GE5 / Orsay).